The chain runs to 68 residues: U-poneritoxin(01)-Om4a (68 aa).

A signal peptide spans 1 to 25; sequence MKPSSLTLAFLVVFMMAIMYNSVQA. Positions 26 to 39 are excised as a propeptide; that stretch reads EALADADAEAFAEA.

This sequence belongs to the formicidae venom precursor-01 superfamily. Homo- or heterodimer with PLP7 (AC A0A348G6I9); disulfide-linked. In terms of processing, truncated sequences of this peptide have also been found in the venom. It is possible they have been cleaved in the venom. As to expression, expressed by the venom gland.

The protein localises to the secreted. In terms of biological role, this homodimer composed of two cationic amphipathic alpha-helical peptides has antimicrobial activities against E.coli (MIC=3.1 uM), S.aureus (MIC=3.1 uM), and S.cerevisiae (MIC=3.1 uM). It also shows histamine-releasing activity (66.4% at 10 uM) and a weak hemolytic activity (10.5% at 50 uM). This chain is U-poneritoxin(01)-Om4a, found in Odontomachus monticola (Trap-jaw ant).